Reading from the N-terminus, the 187-residue chain is HTH-type transcriptional repressor Rv1474c (187 aa).

Residues 10-70 (AARRRQILDG…ALAREDTERM (61 aa)) enclose the HTH tetR-type domain. Residues 33-52 (TVRRLEQAIGMSRGAIFHHF) constitute a DNA-binding region (H-T-H motif).

Homodimer.

Binding to DNA is abolished in the presence of high concentration of iron. Specifically binds to tetracycline, which leads to a conformational change in the structure of the protein and inhibits the DNA binding activity. Represses the expression of the aconitase gene acn and its own expression, in an iron-responsive manner. Binds to the inverted repeat element present in the upstream region of acn (Rv1475c)-Rv1474c operon. Preferentially binds to major groove of the DNA. This chain is HTH-type transcriptional repressor Rv1474c, found in Mycobacterium tuberculosis (strain ATCC 25618 / H37Rv).